An 81-amino-acid chain; its full sequence is Salivary thrombin inhibitor anophelin (81 aa).

The first 22 residues, 1 to 22, serve as a signal peptide directing secretion; the sequence is MANKLFLISLLCVVLVAKIAQA. The N-linked (GlcNAc...) asparagine glycan is linked to Asn45. The blocks active site cleft of host thrombin in a reverse direction compared to substrates stretch occupies residues 70–73; it reads DPGR.

The protein belongs to the anophelin family. As to quaternary structure, interacts with human F2 (thrombin); the interaction results in thrombin inhibition.

It localises to the secreted. Salivary protein with anticoagulant activity that inhibits host thrombin (F2). The sequence is that of Salivary thrombin inhibitor anophelin from Anopheles darlingi (Mosquito).